We begin with the raw amino-acid sequence, 254 residues long: Pimeloyl-[acyl-carrier protein] methyl ester esterase (254 aa).

Positions 16-242 constitute an AB hydrolase-1 domain; sequence LVLIHGWGMN…ASHAPFISHP (227 aa). Substrate is bound by residues tryptophan 22, 82-83, and 143-147; these read SL and FLALQ. Residue serine 82 is the Nucleophile of the active site. Active-site residues include aspartate 207 and histidine 235. Residue histidine 235 coordinates substrate.

Belongs to the AB hydrolase superfamily. Carboxylesterase BioH family. As to quaternary structure, monomer.

The protein localises to the cytoplasm. The catalysed reaction is 6-carboxyhexanoyl-[ACP] methyl ester + H2O = 6-carboxyhexanoyl-[ACP] + methanol + H(+). The protein operates within cofactor biosynthesis; biotin biosynthesis. Functionally, the physiological role of BioH is to remove the methyl group introduced by BioC when the pimeloyl moiety is complete. It allows to synthesize pimeloyl-ACP via the fatty acid synthetic pathway through the hydrolysis of the ester bonds of pimeloyl-ACP esters. The polypeptide is Pimeloyl-[acyl-carrier protein] methyl ester esterase (Photobacterium profundum (strain SS9)).